The chain runs to 279 residues: 4-hydroxy-3-methylbut-2-enyl diphosphate reductase (279 aa).

Cys12 contacts [4Fe-4S] cluster. Positions 36 and 70 each coordinate (2E)-4-hydroxy-3-methylbut-2-enyl diphosphate. Positions 36 and 70 each coordinate dimethylallyl diphosphate. Isopentenyl diphosphate is bound by residues His36 and His70. Position 92 (Cys92) interacts with [4Fe-4S] cluster. His120 is a (2E)-4-hydroxy-3-methylbut-2-enyl diphosphate binding site. His120 is a dimethylallyl diphosphate binding site. His120 contacts isopentenyl diphosphate. Glu122 functions as the Proton donor in the catalytic mechanism. Thr158 serves as a coordination point for (2E)-4-hydroxy-3-methylbut-2-enyl diphosphate. Cys186 is a binding site for [4Fe-4S] cluster. Residues Ser214, Ser215, Asn216, and Ser258 each coordinate (2E)-4-hydroxy-3-methylbut-2-enyl diphosphate. Residues Ser214, Ser215, Asn216, and Ser258 each coordinate dimethylallyl diphosphate. Ser214, Ser215, Asn216, and Ser258 together coordinate isopentenyl diphosphate.

Belongs to the IspH family. Requires [4Fe-4S] cluster as cofactor.

The enzyme catalyses isopentenyl diphosphate + 2 oxidized [2Fe-2S]-[ferredoxin] + H2O = (2E)-4-hydroxy-3-methylbut-2-enyl diphosphate + 2 reduced [2Fe-2S]-[ferredoxin] + 2 H(+). The catalysed reaction is dimethylallyl diphosphate + 2 oxidized [2Fe-2S]-[ferredoxin] + H2O = (2E)-4-hydroxy-3-methylbut-2-enyl diphosphate + 2 reduced [2Fe-2S]-[ferredoxin] + 2 H(+). Its pathway is isoprenoid biosynthesis; dimethylallyl diphosphate biosynthesis; dimethylallyl diphosphate from (2E)-4-hydroxy-3-methylbutenyl diphosphate: step 1/1. The protein operates within isoprenoid biosynthesis; isopentenyl diphosphate biosynthesis via DXP pathway; isopentenyl diphosphate from 1-deoxy-D-xylulose 5-phosphate: step 6/6. In terms of biological role, catalyzes the conversion of 1-hydroxy-2-methyl-2-(E)-butenyl 4-diphosphate (HMBPP) into a mixture of isopentenyl diphosphate (IPP) and dimethylallyl diphosphate (DMAPP). Acts in the terminal step of the DOXP/MEP pathway for isoprenoid precursor biosynthesis. The sequence is that of 4-hydroxy-3-methylbut-2-enyl diphosphate reductase from Campylobacter fetus subsp. fetus (strain 82-40).